A 246-amino-acid polypeptide reads, in one-letter code: Breast cancer metastasis-suppressor 1 (246 aa).

A disordered region spans residues 1 to 57; that stretch reads MPVQPPSKDTEEMEAEGDSAAEMNGEEEESEEERSGSQTESEEESSEMDDEDYERRR. Composition is skewed to acidic residues over residues 11–32 and 40–52; these read EEME…ESEE and ESEE…DDED. Residues 51-98 adopt a coiled-coil conformation; that stretch reads EDYERRRSECVSEMLDLEKQFSELKEKLFRERLSQLRLRLEEVGAERA. Glycyl lysine isopeptide (Lys-Gly) (interchain with G-Cter in SUMO2) cross-links involve residues lysine 184 and lysine 242.

Belongs to the BRMS1 family. As to quaternary structure, homohexamer (Potential). Interacts with SNX6, HDAC1 and RELA. Interacts with ARID4A. Identified in mSin3A corepressor complexes together with SIN3A, SIN3B, RBBP4, RBBP7, SAP30, SUDS3, ARID4A, HDAC1 and HDAC2. Interacts with SPOP; this recruits the protein to a ubiquitin ligase complex containing SPOP and CUL3. In terms of processing, ubiquitinated by a cullin-RING-based BCR (BTB-CUL3-RBX1) E3 ubiquitin-protein ligase complex containing SPOP, leading to proteasomal degradation. As to expression, expression levels are higher in term placentas than in early placentas. Low levels of expression observed in normal pregnancies and in molar pregnancies.

It is found in the nucleus. Its subcellular location is the cytoplasm. Transcriptional repressor. Down-regulates transcription activation by NF-kappa-B by promoting the deacetylation of RELA at 'Lys-310'. Promotes HDAC1 binding to promoter regions. Down-regulates expression of anti-apoptotic genes that are controlled by NF-kappa-B. Promotes apoptosis in cells that have inadequate adherence to a substrate, a process called anoikis, and may thereby inhibit metastasis. May be a mediator of metastasis suppression in breast carcinoma. The chain is Breast cancer metastasis-suppressor 1 (BRMS1) from Homo sapiens (Human).